A 249-amino-acid polypeptide reads, in one-letter code: Eukaryotic translation initiation factor 3 subunit J-A (249 aa).

Over residues 1 to 15 (MADADSWDADSFEPE) the composition is skewed to acidic residues. Positions 1 to 104 (MADADSWDAD…DTPLTPEDEL (104 aa)) are disordered. Over residues 16 to 27 (EPIKKAAVHDKW) the composition is skewed to basic and acidic residues. Acidic residues predominate over residues 28-52 (EGEDEDDDVKDNWDDDEEEEKEEEE). A coiled-coil region spans residues 34–96 (DDVKDNWDDD…QQLEETKRDT (63 aa)). The span at 53–96 (EKKTEAKPTEKKKLSEKIKEKENLQRKKQEELRKQQLEETKRDT) shows a compositional bias: basic and acidic residues.

It belongs to the eIF-3 subunit J family. Component of the eukaryotic translation initiation factor 3 (eIF-3) complex, which is composed of 13 subunits: eif3a, eif3b, eif3c, eif3d, eif3e, eif3f, eif3g, eif3h, eif3i, eif3j, eif3k, eif3l and eif3m.

The protein localises to the cytoplasm. Its function is as follows. Component of the eukaryotic translation initiation factor 3 (eIF-3) complex, which is involved in protein synthesis of a specialized repertoire of mRNAs and, together with other initiation factors, stimulates binding of mRNA and methionyl-tRNAi to the 40S ribosome. The eIF-3 complex specifically targets and initiates translation of a subset of mRNAs involved in cell proliferation. The sequence is that of Eukaryotic translation initiation factor 3 subunit J-A (eif3ja) from Danio rerio (Zebrafish).